Consider the following 527-residue polypeptide: Putative ABC transporter peptide-binding protein BOV_A0352 (527 aa).

The N-terminal stretch at 1–23 (MRLRNFYSALALSAAVFAGPLYA) is a signal peptide.

This sequence belongs to the bacterial solute-binding protein 5 family. As to quaternary structure, the complex is composed of two ATP-binding proteins (BOV_A0347 and BOV_A0348), two transmembrane proteins (BOV_A0350 and BOV_A0351) and a solute-binding protein (BOV_A0352).

The protein resides in the periplasm. Its function is as follows. Probably part of an ABC transporter complex that could be involved in peptide import. The polypeptide is Putative ABC transporter peptide-binding protein BOV_A0352 (Brucella ovis (strain ATCC 25840 / 63/290 / NCTC 10512)).